The following is a 202-amino-acid chain: FMN-dependent NADH:quinone oxidoreductase (202 aa).

FMN-binding positions include Ser-9, 15 to 17 (SAS), 95 to 98 (MYNF), and 139 to 142 (TSGG).

Belongs to the azoreductase type 1 family. Homodimer. It depends on FMN as a cofactor.

It carries out the reaction 2 a quinone + NADH + H(+) = 2 a 1,4-benzosemiquinone + NAD(+). The catalysed reaction is N,N-dimethyl-1,4-phenylenediamine + anthranilate + 2 NAD(+) = 2-(4-dimethylaminophenyl)diazenylbenzoate + 2 NADH + 2 H(+). In terms of biological role, quinone reductase that provides resistance to thiol-specific stress caused by electrophilic quinones. Functionally, also exhibits azoreductase activity. Catalyzes the reductive cleavage of the azo bond in aromatic azo compounds to the corresponding amines. This chain is FMN-dependent NADH:quinone oxidoreductase, found in Pseudomonas savastanoi pv. phaseolicola (strain 1448A / Race 6) (Pseudomonas syringae pv. phaseolicola (strain 1448A / Race 6)).